The primary structure comprises 870 residues: Valine--tRNA ligase (870 aa).

The short motif at 42 to 52 (PNVTGVLHIGH) is the 'HIGH' region element. Positions 527-531 (KMSKS) match the 'KMSKS' region motif. An ATP-binding site is contributed by Lys-530. Residues 800–870 (LENVDLSGIL…ISVELQNLRG (71 aa)) adopt a coiled-coil conformation.

The protein belongs to the class-I aminoacyl-tRNA synthetase family. ValS type 1 subfamily. Monomer.

The protein resides in the cytoplasm. It carries out the reaction tRNA(Val) + L-valine + ATP = L-valyl-tRNA(Val) + AMP + diphosphate. Catalyzes the attachment of valine to tRNA(Val). As ValRS can inadvertently accommodate and process structurally similar amino acids such as threonine, to avoid such errors, it has a 'posttransfer' editing activity that hydrolyzes mischarged Thr-tRNA(Val) in a tRNA-dependent manner. The chain is Valine--tRNA ligase from Campylobacter jejuni subsp. jejuni serotype O:2 (strain ATCC 700819 / NCTC 11168).